The primary structure comprises 113 residues: Iron-sulfur cluster insertion protein ErpA (113 aa).

Iron-sulfur cluster contacts are provided by Cys-41, Cys-105, and Cys-107.

It belongs to the HesB/IscA family. In terms of assembly, homodimer. Requires iron-sulfur cluster as cofactor.

Required for insertion of 4Fe-4S clusters for at least IspG. The polypeptide is Iron-sulfur cluster insertion protein ErpA (Vibrio parahaemolyticus serotype O3:K6 (strain RIMD 2210633)).